The chain runs to 279 residues: Ribosomal RNA small subunit methyltransferase A (279 aa).

S-adenosyl-L-methionine is bound by residues His10, Leu12, Gly37, Glu58, Asp83, and Asn108.

Belongs to the class I-like SAM-binding methyltransferase superfamily. rRNA adenine N(6)-methyltransferase family. RsmA subfamily.

It is found in the cytoplasm. It carries out the reaction adenosine(1518)/adenosine(1519) in 16S rRNA + 4 S-adenosyl-L-methionine = N(6)-dimethyladenosine(1518)/N(6)-dimethyladenosine(1519) in 16S rRNA + 4 S-adenosyl-L-homocysteine + 4 H(+). Its function is as follows. Specifically dimethylates two adjacent adenosines (A1518 and A1519) in the loop of a conserved hairpin near the 3'-end of 16S rRNA in the 30S particle. May play a critical role in biogenesis of 30S subunits. This chain is Ribosomal RNA small subunit methyltransferase A, found in Synechococcus elongatus (strain ATCC 33912 / PCC 7942 / FACHB-805) (Anacystis nidulans R2).